We begin with the raw amino-acid sequence, 366 residues long: GTP cyclohydrolase 1 type 2 homolog (366 aa).

Zn(2+) is bound by residues histidine 64, histidine 65, aspartate 102, histidine 326, and glutamate 329.

The protein belongs to the GTP cyclohydrolase I type 2/NIF3 family. As to quaternary structure, homohexamer.

In Staphylococcus aureus (strain MSSA476), this protein is GTP cyclohydrolase 1 type 2 homolog.